We begin with the raw amino-acid sequence, 106 residues long: 3-phenylpropionate/cinnamic acid dioxygenase ferredoxin subunit (106 aa).

In terms of domain architecture, Rieske spans 4–99 (IYACPVADVP…VHVEGGDIFI (96 aa)). [2Fe-2S] cluster-binding residues include Cys42, His44, Cys62, and His65.

The protein belongs to the bacterial ring-hydroxylating dioxygenase ferredoxin component family. This dioxygenase system consists of four proteins: the two subunits of the hydroxylase component (HcaE and HcaF), a ferredoxin (HcaC) and a ferredoxin reductase (HcaD). [2Fe-2S] cluster is required as a cofactor.

It participates in aromatic compound metabolism; 3-phenylpropanoate degradation. In terms of biological role, part of the multicomponent 3-phenylpropionate dioxygenase, that converts 3-phenylpropionic acid (PP) and cinnamic acid (CI) into 3-phenylpropionate-dihydrodiol (PP-dihydrodiol) and cinnamic acid-dihydrodiol (CI-dihydrodiol), respectively. This protein seems to be a 2Fe-2S ferredoxin. The chain is 3-phenylpropionate/cinnamic acid dioxygenase ferredoxin subunit from Shigella flexneri serotype 5b (strain 8401).